A 278-amino-acid chain; its full sequence is Phosphonates import ATP-binding protein PhnC (278 aa).

The ABC transporter domain occupies 25-273 (LAVKGLVKAY…IIQDIYSDES (249 aa)). Residue 58–65 (GRSGAGKS) participates in ATP binding.

It belongs to the ABC transporter superfamily. Phosphonates importer (TC 3.A.1.9.1) family. As to quaternary structure, the complex is composed of two ATP-binding proteins (PhnC), two transmembrane proteins (PhnE) and a solute-binding protein (PhnD).

Its subcellular location is the cell inner membrane. It catalyses the reaction phosphonate(out) + ATP + H2O = phosphonate(in) + ADP + phosphate + H(+). Functionally, part of the ABC transporter complex PhnCDE involved in phosphonates import. Responsible for energy coupling to the transport system. In Yersinia pestis bv. Antiqua (strain Antiqua), this protein is Phosphonates import ATP-binding protein PhnC.